A 103-amino-acid chain; its full sequence is ATP-dependent Clp protease adapter protein ClpS 2 (103 aa).

The protein belongs to the ClpS family. As to quaternary structure, binds to the N-terminal domain of the chaperone ClpA.

Its function is as follows. Involved in the modulation of the specificity of the ClpAP-mediated ATP-dependent protein degradation. This Agrobacterium fabrum (strain C58 / ATCC 33970) (Agrobacterium tumefaciens (strain C58)) protein is ATP-dependent Clp protease adapter protein ClpS 2.